A 199-amino-acid polypeptide reads, in one-letter code: Peroxiredoxin-1 (199 aa).

Ser2 carries the post-translational modification N-acetylserine. The Thioredoxin domain maps to 6-165 (AKIGYPAPNF…ILRLVQAFQF (160 aa)). The residue at position 7 (Lys7) is an N6-acetyllysine; alternate. Lys7 is covalently cross-linked (Glycyl lysine isopeptide (Lys-Gly) (interchain with G-Cter in SUMO2); alternate). At Lys16 the chain carries N6-acetyllysine. Ser32 carries the post-translational modification Phosphoserine. The active-site Cysteine sulfenic acid (-SOH) intermediate is Cys52. Residue Thr90 is modified to Phosphothreonine. Lys120 participates in a covalent cross-link: Glycyl lysine isopeptide (Lys-Gly) (interchain with G-Cter in SUMO2). Residue Lys136 is modified to N6-acetyllysine. The segment at 176–199 (GWKPGSDTIKPDVQKSKEYFSKQK) is disordered. Basic and acidic residues predominate over residues 184-199 (IKPDVQKSKEYFSKQK). A Glycyl lysine isopeptide (Lys-Gly) (interchain with G-Cter in SUMO1) cross-link involves residue Lys185. Position 197 is an N6-acetyllysine (Lys197).

The protein belongs to the peroxiredoxin family. AhpC/Prx1 subfamily. As to quaternary structure, homodimer; disulfide-linked, upon oxidation. 5 homodimers assemble to form a ring-like decamer. Interacts with GDPD5; forms a mixed-disulfide with GDPD5. Interacts with SESN1 and SESN2. Interacts with FAM107A. Post-translationally, phosphorylated on Thr-90 during the M-phase, which leads to a decrease in enzymatic activity. Acetylation increases reducing activity and resistance to superoxidation. Deacetylated by HDAC6 which decreases reducing activity.

It localises to the cytoplasm. It carries out the reaction a hydroperoxide + [thioredoxin]-dithiol = an alcohol + [thioredoxin]-disulfide + H2O. In terms of biological role, thiol-specific peroxidase that catalyzes the reduction of hydrogen peroxide and organic hydroperoxides to water and alcohols, respectively. Plays a role in cell protection against oxidative stress by detoxifying peroxides and as sensor of hydrogen peroxide-mediated signaling events. Might participate in the signaling cascades of growth factors and tumor necrosis factor-alpha by regulating the intracellular concentrations of H(2)O(2). Reduces an intramolecular disulfide bond in GDPD5 that gates the ability to GDPD5 to drive postmitotic motor neuron differentiation. This chain is Peroxiredoxin-1 (PRDX1), found in Cricetulus griseus (Chinese hamster).